The following is a 365-amino-acid chain: Peptide chain release factor 2 (365 aa).

Glutamine 252 is modified (N5-methylglutamine).

The protein belongs to the prokaryotic/mitochondrial release factor family. In terms of processing, methylated by PrmC. Methylation increases the termination efficiency of RF2.

It localises to the cytoplasm. Peptide chain release factor 2 directs the termination of translation in response to the peptide chain termination codons UGA and UAA. This Shewanella woodyi (strain ATCC 51908 / MS32) protein is Peptide chain release factor 2.